The sequence spans 92 residues: Small ribosomal subunit protein uS19 (92 aa).

This sequence belongs to the universal ribosomal protein uS19 family.

Protein S19 forms a complex with S13 that binds strongly to the 16S ribosomal RNA. In Rickettsia canadensis (strain McKiel), this protein is Small ribosomal subunit protein uS19.